A 77-amino-acid chain; its full sequence is Acyl carrier protein (77 aa).

A Carrier domain is found at 2-77 (SNIEERVKKI…AAIDYVNSAQ (76 aa)). At serine 37 the chain carries O-(pantetheine 4'-phosphoryl)serine.

The protein belongs to the acyl carrier protein (ACP) family. Post-translationally, 4'-phosphopantetheine is transferred from CoA to a specific serine of apo-ACP by AcpS. This modification is essential for activity because fatty acids are bound in thioester linkage to the sulfhydryl of the prosthetic group.

The protein resides in the cytoplasm. It functions in the pathway lipid metabolism; fatty acid biosynthesis. Its function is as follows. Carrier of the growing fatty acid chain in fatty acid biosynthesis. The sequence is that of Acyl carrier protein from Vibrio campbellii (strain ATCC BAA-1116).